Consider the following 382-residue polypeptide: Pyrimidine monooxygenase RutA (382 aa).

FMN-binding positions include 68–69 (IK), Asn134, Glu143, 159–160 (RY), and Ser209.

It belongs to the NtaA/SnaA/DszA monooxygenase family. RutA subfamily.

It carries out the reaction uracil + FMNH2 + NADH + O2 = (Z)-3-ureidoacrylate + FMN + NAD(+) + H2O + H(+). It catalyses the reaction thymine + FMNH2 + NADH + O2 = (Z)-2-methylureidoacrylate + FMN + NAD(+) + H2O + H(+). Its function is as follows. Catalyzes the pyrimidine ring opening between N-3 and C-4 by an unusual flavin hydroperoxide-catalyzed mechanism, adding oxygen atoms in the process to yield ureidoacrylate peracid, that immediately reacts with FMN forming ureidoacrylate and FMN-N(5)-oxide. The FMN-N(5)-oxide reacts spontaneously with NADH to produce FMN. Requires the flavin reductase RutF to regenerate FMN in vivo. The polypeptide is Pyrimidine monooxygenase RutA (rutA) (Escherichia coli O157:H7).